The sequence spans 1331 residues: ABC multidrug transporter MDR2 (1331 aa).

2 stretches are compositionally biased toward basic and acidic residues: residues 1-20 and 31-41; these read MVEV…KQEN and SDKEKVAKKGN. Positions 1-51 are disordered; the sequence is MVEVSEKPNTQDDGVSKQENRNPASSSSSTSDKEKVAKKGNSDATKSSTPE. 4 helical membrane-spanning segments follow: residues 93–113, 147–167, 219–239, and 242–262; these read MIFL…LPLF, YFVY…VGFI, KVGL…IGYV, and WKLA…MGGI. The ABC transmembrane type-1 1 domain occupies 97-387; that stretch reads AIVSLASIAA…VAPNTQAFAS (291 aa). N-linked (GlcNAc...) asparagine glycosylation occurs at Asn293. Transmembrane regions (helical) follow at residues 325 to 345 and 358 to 378; these read LGIM…LGFW and LSAI…IGNV. Residues 422 to 667 form the ABC transporter 1 domain; it reads IEFRGIKHIY…KGTYLQLVEA (246 aa). 457-464 contributes to the ATP binding site; it reads GPSGSGKS. Asn529 and Asn737 each carry an N-linked (GlcNAc...) asparagine glycan. 2 consecutive transmembrane segments (helical) span residues 762 to 782 and 810 to 830; these read LCGF…SVFF and FLML…IFAI. One can recognise an ABC transmembrane type-1 2 domain in the interval 764–1051; the sequence is GFFFAVLSGA…VFSFSPDMGK (288 aa). Asn860 carries N-linked (GlcNAc...) asparagine glycosylation. A run of 4 helical transmembrane segments spans residues 884–904, 910–930, 995–1015, and 1025–1045; these read LGTI…ALAF, LVCI…FWIL, ASQS…GGLL, and FFLC…VFSF. Positions 1086-1324 constitute an ABC transporter 2 domain; it reads IEFRDVHFRY…KGRYYELVHM (239 aa). Asn1108 carries an N-linked (GlcNAc...) asparagine glycan. 1121-1128 contributes to the ATP binding site; the sequence is GPSGCGKS.

This sequence belongs to the ABC transporter superfamily. ABCB family. Multidrug resistance exporter (TC 3.A.1.201) subfamily.

The protein localises to the cell membrane. It catalyses the reaction itraconazole(in) + ATP + H2O = itraconazole(out) + ADP + phosphate + H(+). In terms of biological role, pleiotropic ABC efflux transporter that may be involved in the modulation susceptibility to a wide range of unrelated cytotoxic compounds. The chain is ABC multidrug transporter MDR2 from Trichophyton equinum (strain ATCC MYA-4606 / CBS 127.97) (Horse ringworm fungus).